Here is a 428-residue protein sequence, read N- to C-terminus: C4-dicarboxylate transport protein (428 aa).

A run of 9 helical transmembrane segments spans residues 4–24, 44–64, 76–96, 142–162, 184–204, 222–242, 289–309, 326–346, and 352–372; these read SLFKSLYFQVLTAIAIGILLG, LIKMIIAPVIFCTVVTGIAGM, VALLYFEIVSTIALIIGLIIV, IGAFASGNILQVLLFAVLFGF, VIFGIINMIMRLAPIGAFGAM, LIICFYITCILFVVVVLGTIA, VVGLVIPTGYSFNLDGTSIYL, IFHQITLLVVLLLSSKGAAGV, and IVLAATISAVGHLPVAGLALI.

This sequence belongs to the dicarboxylate/amino acid:cation symporter (DAACS) (TC 2.A.23) family.

It localises to the cell inner membrane. In terms of biological role, responsible for the transport of dicarboxylates such as succinate, fumarate, and malate from the periplasm across the membrane. The polypeptide is C4-dicarboxylate transport protein (Salmonella gallinarum (strain 287/91 / NCTC 13346)).